Consider the following 35-residue polypeptide: Photosystem II reaction center protein T (35 aa).

A helical transmembrane segment spans residues 3–23 (ALVYTFLLVSTLGIIFFAIFF).

Belongs to the PsbT family. In terms of assembly, PSII is composed of 1 copy each of membrane proteins PsbA, PsbB, PsbC, PsbD, PsbE, PsbF, PsbH, PsbI, PsbJ, PsbK, PsbL, PsbM, PsbT, PsbY, PsbZ, Psb30/Ycf12, at least 3 peripheral proteins of the oxygen-evolving complex and a large number of cofactors. It forms dimeric complexes.

The protein localises to the plastid. The protein resides in the chloroplast thylakoid membrane. Its function is as follows. Found at the monomer-monomer interface of the photosystem II (PS II) dimer, plays a role in assembly and dimerization of PSII. PSII is a light-driven water plastoquinone oxidoreductase, using light energy to abstract electrons from H(2)O, generating a proton gradient subsequently used for ATP formation. The chain is Photosystem II reaction center protein T from Pinus thunbergii (Japanese black pine).